We begin with the raw amino-acid sequence, 121 residues long: Large ribosomal subunit protein uL18 (121 aa).

The protein belongs to the universal ribosomal protein uL18 family. In terms of assembly, part of the 50S ribosomal subunit; part of the 5S rRNA/L5/L18/L25 subcomplex. Contacts the 5S and 23S rRNAs.

Its function is as follows. This is one of the proteins that bind and probably mediate the attachment of the 5S RNA into the large ribosomal subunit, where it forms part of the central protuberance. This Polaromonas sp. (strain JS666 / ATCC BAA-500) protein is Large ribosomal subunit protein uL18.